The following is a 2877-amino-acid chain: Desmoplakin (2877 aa).

The interval 1-20 (MSCNGGSHPRINTLGRMTRA) is disordered. An interaction with PKP1, JUP, PKP2 region spans residues 1-591 (MSCNGGSHPR…DYMKTIEDLE (591 aa)). The interval 1 to 1063 (MSCNGGSHPR…ANSENCNKNK (1063 aa)) is globular 1. 2 positions are modified to phosphoserine: Ser-22 and Ser-62. Position 65 is a phosphotyrosine (Tyr-65). The residue at position 70 (Thr-70) is a Phosphothreonine. 3 positions are modified to phosphoserine: Ser-174, Ser-175, and Ser-183. Spectrin repeat units follow at residues 185–278 (SGWD…HLRQ) and 279–382 (LQNI…LKEN). Residues 383-453 (AAYFQFFEEA…NLVNKSKKIV (71 aa)) form a Spectrin 3a repeat. Positions 465-522 (NKPIILRALCDYKQDQKIVHKGDECILKDNNERSKWYVTGPGGVDMLVPSVGLIIPPP) constitute an SH3 domain. The stretch at 523 to 552 (NPLAVDLSCKIEQYYEAILALWNQLYINMK) is one Spectrin 3b repeat. Spectrin repeat units lie at residues 553-634 (SLVS…IQLP), 661-776 (VIET…SLCS), and 777-890 (VRAL…DLEK). Coiled coils occupy residues 1034-1280 (LKLK…AEEN), 1313-1354 (NARH…YENE), 1395-1443 (TSGY…QKAS), and 1473-1926 (KQSL…KLED). Residues 1064–1952 (FLDQNLQKYQ…QKEIDKLRQR (889 aa)) form a central fibrous rod domain region. Phosphoserine occurs at positions 1665, 1715, and 2031. The globular 2 stretch occupies residues 1953-2877 (PYGSHRETQT…YSFSSSSIGY (925 aa)). The tract at residues 1967–2215 (TVDSSKLVFD…LLLSVQKRSM (249 aa)) is 4.5 X 38 AA tandem repeats (Domain A). Plectin repeat units follow at residues 2016-2052 (QPFL…PEST), 2053-2090 (VMLL…FDDR), 2091-2128 (QQIY…RETG), 2129-2166 (MRLL…RDLY), 2170-2204 (NDPR…PHTG), 2205-2240 (LLLL…PSTV), 2258-2295 (KDFL…PGTA), 2296-2333 (LELL…IEFK), 2334-2371 (EKLL…KGHG), 2372-2409 (IRLL…EELS), 2413-2447 (SDPS…EETG), 2463-2500 (SQKN…YETF), 2514-2551 (TITG…RKFF), 2617-2654 (SDPL…SITG), 2655-2692 (QRLL…QDMA), 2731-2768 (QRFL…GRAA), and 2769-2806 (QRLQ…DITG). Phosphoserine is present on residues Ser-2214, Ser-2216, and Ser-2232. The 4.5 X 38 AA tandem repeats (Domain B) stretch occupies residues 2251-2453 (DEVGERIKDF…EETGLCLLPL (203 aa)). The LRR 15 repeat unit spans residues 2603-2628 (ISSVRNLTIRSSSLSDPLEESSPIAA). The 4.5 X 38 AA tandem repeats (Domain C) stretch occupies residues 2616–2828 (LSDPLEESSP…GLPSPYNMSA (213 aa)). Residues Ser-2817 and Ser-2822 each carry the phosphoserine modification. The segment at 2817–2877 (SKGLPSPYNM…YSFSSSSIGY (61 aa)) is disordered. Phosphotyrosine is present on Tyr-2824. Residues Ser-2827 and Ser-2831 each carry the phosphoserine modification. The 6 X 4 AA tandem repeats of G-S-R-[SR] stretch occupies residues 2830-2853 (GSRSGSRSGSRSGSRSGSRSGSRR). Over residues 2830 to 2853 (GSRSGSRSGSRSGSRSGSRSGSRR) the composition is skewed to low complexity. Residues Arg-2832 and Arg-2853 each carry the omega-N-methylarginine modification. Ser-2855 is modified (phosphoserine). Thr-2859 is modified (phosphothreonine). Residues 2862-2877 (SSYSYSYSFSSSSIGY) are compositionally biased toward low complexity. Phosphoserine is present on Ser-2874.

This sequence belongs to the plakin or cytolinker family. As to quaternary structure, homodimer. Interacts with COL17A1 (via cytoplasmic region). Interacts with DSC2. Interacts with PKP1. Interacts with PKP2. Interacts weakly with TMEM65. Post-translationally, phosphorylation at Ser-2855 increases association with intermediate filament cytokeratin, potentially facilitating interaction between desmosome junctions and intermediate filament architecture. As to expression, expressed in cardiomyocytes (at protein level).

The protein resides in the cell junction. It is found in the desmosome. The protein localises to the cell membrane. It localises to the cytoplasm. In terms of biological role, major high molecular weight protein of desmosomes. Regulates profibrotic gene expression in cardiomyocytes via activation of the MAPK14/p38 MAPK signaling cascade and increase in TGFB1 protein abundance. This is Desmoplakin from Rattus norvegicus (Rat).